Consider the following 386-residue polypeptide: Succinate--CoA ligase [ADP-forming] subunit beta (386 aa).

Residues 9–244 (KALLRAAGIK…TTQEDHRETQ (236 aa)) enclose the ATP-grasp domain. ATP-binding positions include K46, 53-55 (GRG), E100, and R103. Mg(2+)-binding residues include N199 and D213. Residues N264 and 321-323 (GIV) contribute to the substrate site.

Belongs to the succinate/malate CoA ligase beta subunit family. In terms of assembly, heterotetramer of two alpha and two beta subunits. Requires Mg(2+) as cofactor.

It catalyses the reaction succinate + ATP + CoA = succinyl-CoA + ADP + phosphate. The catalysed reaction is GTP + succinate + CoA = succinyl-CoA + GDP + phosphate. The protein operates within carbohydrate metabolism; tricarboxylic acid cycle; succinate from succinyl-CoA (ligase route): step 1/1. Its function is as follows. Succinyl-CoA synthetase functions in the citric acid cycle (TCA), coupling the hydrolysis of succinyl-CoA to the synthesis of either ATP or GTP and thus represents the only step of substrate-level phosphorylation in the TCA. The beta subunit provides nucleotide specificity of the enzyme and binds the substrate succinate, while the binding sites for coenzyme A and phosphate are found in the alpha subunit. The protein is Succinate--CoA ligase [ADP-forming] subunit beta of Dichelobacter nodosus (strain VCS1703A).